The primary structure comprises 179 residues: Natural killer cells antigen CD94 (179 aa).

Over 1-10 (MAVFKTTLWR) the chain is Cytoplasmic. Residues 11 to 31 (LISGTLGIICLSLMATLGILL) traverse the membrane as a helical; Signal-anchor for type II membrane protein segment. At 32–179 (KNSFTKLSIE…NRYICKQQLI (148 aa)) the chain is on the extracellular side. Intrachain disulfides connect Cys-58-Cys-70 and Cys-61-Cys-72. In terms of domain architecture, C-type lectin spans 68–175 (YRCNCYFISS…CEDKNRYICK (108 aa)). N-linked (GlcNAc...) asparagine glycans are attached at residues Asn-83 and Asn-132. Cystine bridges form between Cys-89/Cys-174 and Cys-152/Cys-166.

Can form disulfide-bonded heterodimer with NKG2 family members KLRC1 and KLRC2. KLRD1-KLRC1 heterodimer interacts with peptide-bound MHC-E-B2M heterotrimeric complex. KLRD1 plays a prominent role in directly interacting with MHC-E. KLRD1-KLRC1 interacts with much higher affinity with peptide-bound MHC-E-B2M than KLRD1-KLRC2. Interacts with the adapter protein TYROBP/DAP12; this interaction is required for cell surface expression and cell activation. Natural killer cells.

The protein localises to the cell membrane. Its function is as follows. Immune receptor involved in self-nonself discrimination. In complex with KLRC1 or KLRC2 on cytotoxic and regulatory lymphocyte subsets, recognizes non-classical major histocompatibility (MHC) class Ib molecule MHC-E loaded with self-peptides derived from the signal sequence of classical MHC class Ia and non-classical MHC class Ib molecules. Enables cytotoxic cells to monitor the expression of MHC class I molecules in healthy cells and to tolerate self. Primarily functions as a ligand binding subunit as it lacks the capacity to signal. In terms of biological role, KLRD1-KLRC1 acts as an immune inhibitory receptor. Key inhibitory receptor on natural killer (NK) cells that regulates their activation and effector functions. Dominantly counteracts T cell receptor signaling on a subset of memory/effector CD8-positive T cells as part of an antigen-driven response to avoid autoimmunity. On intraepithelial CD8-positive gamma-delta regulatory T cells triggers TGFB1 secretion, which in turn limits the cytotoxic programming of intraepithelial CD8-positive alpha-beta T cells, distinguishing harmless from pathogenic antigens. In MHC-E-rich tumor microenvironment, acts as an immune inhibitory checkpoint and may contribute to progressive loss of effector functions of NK cells and tumor-specific T cells, a state known as cell exhaustion. Upon MHC-E-peptide binding, transmits intracellular signals through KLRC1 immunoreceptor tyrosine-based inhibition motifs (ITIMs) by recruiting INPP5D/SHIP-1 and INPPL1/SHIP-2 tyrosine phosphatases to ITIMs, and ultimately opposing signals transmitted by activating receptors through dephosphorylation of proximal signaling molecules. Functionally, KLRD1-KLRC2 acts as an immune activating receptor. On cytotoxic lymphocyte subsets recognizes MHC-E loaded with signal sequence-derived peptides from non-classical MHC class Ib MHC-G molecules, likely playing a role in the generation and effector functions of adaptive NK cells and in maternal-fetal tolerance during pregnancy. Regulates the effector functions of terminally differentiated cytotoxic lymphocyte subsets, and in particular may play a role in adaptive NK cell response to viral infection. Upon MHC-E-peptide binding, transmits intracellular signals via the adapter protein TYROBP/DAP12, triggering the phosphorylation of proximal signaling molecules and cell activation. This Pan troglodytes (Chimpanzee) protein is Natural killer cells antigen CD94 (KLRD1).